Consider the following 218-residue polypeptide: N-(5'-phosphoribosyl)anthranilate isomerase (218 aa).

The protein belongs to the TrpF family.

The catalysed reaction is N-(5-phospho-beta-D-ribosyl)anthranilate = 1-(2-carboxyphenylamino)-1-deoxy-D-ribulose 5-phosphate. The protein operates within amino-acid biosynthesis; L-tryptophan biosynthesis; L-tryptophan from chorismate: step 3/5. The chain is N-(5'-phosphoribosyl)anthranilate isomerase from Chelativorans sp. (strain BNC1).